We begin with the raw amino-acid sequence, 203 residues long: FMN-dependent NADH:quinone oxidoreductase (203 aa).

FMN-binding positions include serine 9 and 15–17 (SKS).

This sequence belongs to the azoreductase type 1 family. Homodimer. Requires FMN as cofactor.

The catalysed reaction is 2 a quinone + NADH + H(+) = 2 a 1,4-benzosemiquinone + NAD(+). It catalyses the reaction N,N-dimethyl-1,4-phenylenediamine + anthranilate + 2 NAD(+) = 2-(4-dimethylaminophenyl)diazenylbenzoate + 2 NADH + 2 H(+). Functionally, quinone reductase that provides resistance to thiol-specific stress caused by electrophilic quinones. In terms of biological role, also exhibits azoreductase activity. Catalyzes the reductive cleavage of the azo bond in aromatic azo compounds to the corresponding amines. The sequence is that of FMN-dependent NADH:quinone oxidoreductase from Bordetella avium (strain 197N).